The sequence spans 386 residues: Acyl-[acyl-carrier-protein] dehydrogenase MbtN (386 aa).

It belongs to the acyl-CoA dehydrogenase family. It depends on FAD as a cofactor.

The protein operates within siderophore biosynthesis; mycobactin biosynthesis. In terms of biological role, catalyzes the dehydrogenation at the alpha-beta position of ACP-bound acyl chains. This results in the introduction of a double bond in the lipidic chain, which is further transferred to the epsilon-amino group of lysine residue in the mycobactin core by MbtK. The polypeptide is Acyl-[acyl-carrier-protein] dehydrogenase MbtN (mbtN) (Mycobacterium bovis (strain ATCC BAA-935 / AF2122/97)).